The primary structure comprises 616 residues: DNA-binding protein RFX5 (616 aa).

The disordered stretch occupies residues 1-29 (MAEDEPDAKSPKTGGRAPPGGAEAGEPTT). Position 2 is an N-acetylalanine (Ala2). Residue Ser10 is modified to Phosphoserine. Residues 13–29 (TGGRAPPGGAEAGEPTT) are compositionally biased toward low complexity. Positions 25 to 90 (GEPTTLLQRL…PSTLSNEEYM (66 aa)) are N-terminal domain. The interval 62-66 (LYLYL) is leucine-rich region; critical for dimer formation and for interaction with RFXAP. The segment at residues 92–168 (AYRWIRNHLE…YCYSGIRRKT (77 aa)) is a DNA-binding region (RFX-type winged-helix). Positions 173–178 (PPLPGL) match the PxLPxI/L motif; mediates interaction with RFXANK motif. Residue Ser185 is modified to Phosphoserine. Disordered regions lie at residues 252-314 (AEED…ESSA) and 391-616 (LPGP…ATPP). Positions 276–293 (GAHKKPERLAQPPKDLEA) are enriched in basic and acidic residues. Over residues 391–401 (LPGPGPGPGRA) the composition is skewed to pro residues. The span at 424-434 (GPHDKGVKRTA) shows a compositional bias: basic and acidic residues. The span at 463–473 (KRKRGRPRKKS) shows a compositional bias: basic residues. Gly residues predominate over residues 534–546 (QGDGTVSKGGRGP). Positions 606 to 616 (QEHKDPKATPP) are enriched in basic and acidic residues.

This sequence belongs to the RFX family. As to quaternary structure, homodimer. The RFX heterotetrameric complex consists of 2 molecules of RFX5 and one each of RFXAP and RFX-B/RFXANK; with each subunit representing a separate complementation group. Interacts (via PxLPxI/L motif) with RFXANK (via ankyrin repeats); the interaction is direct. RFX forms cooperative DNA binding complexes with X2BP and CBF/NF-Y. RFX associates with CIITA to form an active transcriptional complex. Post-translationally, phosphorylated. In terms of tissue distribution, ubiquitous.

The protein localises to the nucleus. Functionally, activates transcription from class II MHC promoters. Recognizes X-boxes. Mediates cooperative binding between RFX and NF-Y. RFX binds the X1 box of MHC-II promoters. In Homo sapiens (Human), this protein is DNA-binding protein RFX5 (RFX5).